The following is a 230-amino-acid chain: Flagellar L-ring protein (230 aa).

Positions 1 to 15 (MSRLPSLSSLCLAIA) are cleaved as a signal peptide. The N-palmitoyl cysteine moiety is linked to residue Cys-16. Cys-16 is lipidated: S-diacylglycerol cysteine.

It belongs to the FlgH family. As to quaternary structure, the basal body constitutes a major portion of the flagellar organelle and consists of four rings (L,P,S, and M) mounted on a central rod.

It localises to the cell outer membrane. Its subcellular location is the bacterial flagellum basal body. In terms of biological role, assembles around the rod to form the L-ring and probably protects the motor/basal body from shearing forces during rotation. This Xanthomonas campestris pv. campestris (strain 8004) protein is Flagellar L-ring protein.